We begin with the raw amino-acid sequence, 427 residues long: Flavohemoprotein (427 aa).

One can recognise a Globin domain in the interval Glu-30–Lys-168. His-114 provides a ligand contact to heme b. Residues Tyr-124 and Glu-167 each act as charge relay system in the active site. Residues Trp-176–Pro-427 form a reductase region. In terms of domain architecture, FAD-binding FR-type spans Asn-177–Lys-285. Residues Tyr-216 and Arg-232–Ser-235 contribute to the FAD site. Residue Gly-301–Pro-306 coordinates NADP(+). Phe-421–Pro-424 serves as a coordination point for FAD.

Belongs to the globin family. Two-domain flavohemoproteins subfamily. This sequence in the C-terminal section; belongs to the flavoprotein pyridine nucleotide cytochrome reductase family. Requires FAD as cofactor. Heme b is required as a cofactor.

It localises to the cytoplasm. It is found in the nucleus. The enzyme catalyses 2 nitric oxide + NADPH + 2 O2 = 2 nitrate + NADP(+) + H(+). The catalysed reaction is 2 nitric oxide + NADH + 2 O2 = 2 nitrate + NAD(+) + H(+). In terms of biological role, is involved in NO detoxification in an aerobic process, termed nitric oxide dioxygenase (NOD) reaction that utilizes O(2) and NAD(P)H to convert NO to nitrate, which protects the fungus from various noxious nitrogen compounds. Therefore, plays a central role in the inducible response to nitrosative stress. Its function is as follows. In the presence of oxygen and NADH, it has NADH oxidase activity, which leads to the generation of superoxide and H(2)O(2). Under anaerobic conditions, it also exhibits nitric oxide reductase and FAD reductase activities. However, all these reactions are much lower than NOD activity. The sequence is that of Flavohemoprotein from Schizosaccharomyces pombe (strain 972 / ATCC 24843) (Fission yeast).